An 847-amino-acid chain; its full sequence is B-cell receptor CD22 (847 aa).

The signal sequence occupies residues 1–19 (MHLLGPWLLLLVLEYLAFS). In terms of domain architecture, Ig-like V-type spans 20–138 (DSSKWVFEHP…MERIHLNVSE (119 aa)). At 20–687 (DSSKWVFEHP…YYSPETIGRR (668 aa)) the chain is on the extracellular side. Intrachain disulfides connect cysteine 39-cysteine 167, cysteine 44-cysteine 102, and cysteine 161-cysteine 219. N-linked (GlcNAc...) asparagine glycans are attached at residues asparagine 67, asparagine 101, and asparagine 112. Arginine 120 lines the N-acetylneuraminate pocket. Asparagine 135, asparagine 164, and asparagine 231 each carry an N-linked (GlcNAc...) asparagine glycan. 6 consecutive Ig-like C2-type domains span residues 143-235 (PHIQ…DTVQ), 242-326 (PKLE…VFLQ), 331-416 (PEPS…LDVQ), 419-500 (PKKV…VALN), 505-582 (PRDV…QTAS), and 593-676 (PRRL…STLT). Cystine bridges form between cysteine 265-cysteine 309, cysteine 353-cysteine 396, cysteine 442-cysteine 484, and cysteine 529-cysteine 571. Residues asparagine 363, asparagine 445, and asparagine 479 are each glycosylated (N-linked (GlcNAc...) asparagine). N-linked (GlcNAc...) asparagine glycosylation is found at asparagine 574 and asparagine 634. A disulfide bond links cysteine 616 and cysteine 659. A helical transmembrane segment spans residues 688–706 (VAVGLGSCLAILILAICGL). At 707–847 (KLQRRWKRTQ…ENVDYVILKH (141 aa)) the chain is on the cytoplasmic side. A phosphoserine mark is found at serine 725, serine 726, and serine 729. 2 consecutive short sequence motifs (ITIM motif) follow at residues 760–765 (ISYTTL) and 794–799 (VTYSAL). Phosphotyrosine is present on tyrosine 762. Phosphotyrosine is present on residues tyrosine 807, tyrosine 822, and tyrosine 842. Short sequence motifs (ITIM motif) lie at residues 820 to 825 (IHYSEL) and 840 to 845 (VDYVIL).

The protein belongs to the immunoglobulin superfamily. SIGLEC (sialic acid binding Ig-like lectin) family. Predominantly monomer of isoform CD22-beta. Also found as heterodimer of isoform CD22-beta and a shorter isoform. Interacts with PTPN6/SHP-1, LYN, SYK, PIK3R1/PIK3R2 and PLCG1 upon phosphorylation. Interacts with GRB2, INPP5D and SHC1 upon phosphorylation. May form a complex with INPP5D/SHIP, GRB2 and SHC1. Post-translationally, phosphorylation of Tyr-762, Tyr-807 and Tyr-822 are involved in binding to SYK, GRB2 and SYK, respectively. Phosphorylation of Tyr-842 is involved in binding to SYK, PLCG2 and PIK3R1/PIK3R2. In terms of processing, phosphorylated on tyrosine residues by LYN. B-lymphocytes.

The protein resides in the cell membrane. Functionally, most highly expressed siglec (sialic acid-binding immunoglobulin-like lectin) on B-cells that plays a role in various aspects of B-cell biology including differentiation, antigen presentation, and trafficking to bone marrow. Binds to alpha 2,6-linked sialic acid residues of surface molecules such as CD22 itself, CD45 and IgM in a cis configuration. Can also bind to ligands on other cells as an adhesion molecule in a trans configuration. Acts as an inhibitory coreceptor on the surface of B-cells and inhibits B-cell receptor induced signaling, characterized by inhibition of the calcium mobilization and cellular activation. Mechanistically, the immunoreceptor tyrosine-based inhibitory motif domain is phosphorylated by the Src kinase LYN, which in turn leads to the recruitment of the protein tyrosine phosphatase 1/PTPN6, leading to the negative regulation of BCR signaling. If this negative signaling from is of sufficient strength, apoptosis of the B-cell can be induced. The polypeptide is B-cell receptor CD22 (Homo sapiens (Human)).